Here is a 522-residue protein sequence, read N- to C-terminus: Insulinoma-associated protein 1 (522 aa).

The span at 1-12 (MPRGFLVKRSKK) shows a compositional bias: basic residues. The segment at 1–20 (MPRGFLVKRSKKSTPVSYRI) is SNAG domain. Disordered regions lie at residues 1–112 (MPRG…SREH) and 182–235 (AAEA…KPKA). The tract at residues 2 to 7 (PRGFLV) is required and sufficient for interaction with KDM1A. Positions 43 to 57 (PPAPGPGPVPGPLQP) are necessary for interaction with CCND1. Positions 43–61 (PPAPGPGPVPGPLQPPPPT) are enriched in pro residues. Low complexity-rich tracts occupy residues 66 to 75 (AALAAALACA) and 212 to 228 (ASAAAAAEPPAKVAKAP). The C2H2-type 1; atypical zinc finger occupies 277–297 (FICQLCKEEYADPFALAQHKC). The C2H2-type 2 zinc finger occupies 305–327 (YRCPECAKVFSCPANLASHRRWH). A disordered region spans residues 325 to 373 (RWHKPRPAPAAARACEPETPARAEAREATGGGGSDRDTPSPGGVSESGS). Basic and acidic residues predominate over residues 339–351 (CEPETPARAEARE). C2H2-type zinc fingers lie at residues 378 to 400 (YECHHCAKKFRRQAYLRKHLLAH), 453 to 476 (HLCPVCGETFPSKGAQERHLRLLH), and 481 to 504 (FPCKYCPATFYSSPGLTRHINKCH).

The protein belongs to the INSM1 family. Interacts (via the N-terminal region) with CCND1 (via cyclin N-terminal domain); the interaction competes with the binding of CCND1 to CDK4 during cell cycle progression and increases its transcriptional repressor activity. Interacts with HDAC3; the interaction increases its transcriptional repressor activity. Interacts (via the SNAG domain) with HDAC1. Interacts (via the SNAG domain) with HDAC2. Interacts (via the SNAG domain) with KDM1A. Interacts (via the SNAG domain) with RCOR1. Interacts with SORBS1.

The protein resides in the nucleus. Functionally, sequence-specific DNA-binding transcriptional regulator that plays a key role in neurogenesis and neuroendocrine cell differentiation during embryonic and/or fetal development. Binds to the consensus sequence 5'-[TG][TC][TC][TT][GA]GGG[CG]A-3' in target promoters. Acts as a transcriptional repressor of NEUROD1 and INS expression via its interaction with cyclin CCND1 in a cell cycle-independent manner. Negatively regulates skeletal muscle-specific gene expression in endocrine cells of the pituitary by inhibiting the Notch signaling pathway. Represses target gene transcription by recruiting chromatin-modifying factors, such as HDAC1, HDAC2, HDAC3, KDM1A and RCOR1 histone deacetylases. Binds to its own promoter, suggesting autoregulation as a self-control feedback mechanism. Competes with histone H3 for the same binding site on the histone demethylase complex formed by KDM1A and RCOR1, and thereby inhibits demethylation of histone H3 at 'Lys-4'. Promotes the generation and expansion of neuronal basal progenitor cells in the developing neocortex. Involved in the differentiation of endocrine cells of the developing anterior pituitary gland, of the pancreas and intestine, and of sympatho-adrenal cells in the peripheral nervous system. Promotes cell cycle signaling arrest and inhibition of cellular proliferation. This Bos taurus (Bovine) protein is Insulinoma-associated protein 1 (INSM1).